The sequence spans 1589 residues: MAKQLNLPENTDDWTKEDVNQWLESHKIDQKHREILTEQDVNGAVLKWLKKEHLVDMGITHGPAIQIEELFKELRKTAIEDSIQTSKMGKPSKNAPKDQTVSQKERRETSKQKQKGKENPDMANPSAMSTTAKGSKSLKVELIEDKIDYTKERQPSIDLTCVSYPFDEFSNPYRYKLDFSLQPETGPGNLIDPIHEFKAFTNTATATEEDVKMKFSNEVFRFASACMNSRTNGTIHFGVKDKPHGKIVGIKVTNDTKEALINHFNLMINKYFEDHQVQQAKKCIREPRFVEVLLPNSTLSDRFVIEVDIIPQFSECQYDYFQIKMQNYNNKIWEQSKKFSLFVRDGTSSKDITKNKVDFRAFKADFKTLAESRKAAEEKFRAKTNKKEREGPKLVKLLTGNQDLLDNSYYEQYILVTNKCHPDQTKHLDFLKEIKWFAVLEFDPESNINGVVKAYKESRVANLHFPSVYVEQKTTPNETISTLNLYHQPSWIFCNGRLDLDSEKYKPFDPSSWQRERASDVRKLISFLTHEDIMPRGKFLVVFLLLSSVDDPRDPLIETFCAFYQDLKGMENILCICVHPHIFQGWKDLLEARLIKHQDEISSQCISALSLEEINGTILKLKSVTQSSKRLLPSIGLSTVLLKKEEDIMTALEIICENECEGTLLEKDKNKFLEFKASKEEDFYRGGKVSWWNFYFSSESYSSPFVKRDKYERLEAMIQNCADSSKPTSTKIIHLYHHPGCGGTTLAMHILWELRKKFRCAVLKNKTVDFSEIGEQVTSLITYGAMNRQEYVPVLLLVDDFEEQDNVYLLQYSIQTAIAKKYIRYEKPLVIILNCMRSQNPEKSARIPDSIAVIQQLSPKEQRAFELKLKEIKEQHKNFEDFYSFMIMKTNFNKEYIENVVRNILKGQNIFTKEAKLFSFLALLNSYVPDTTISLSQCEKFLGIGNKKAFWGTEKFEDKMGTYSTILIKTEVIECGNYCGVRIIHSLIAEFSLEELKKSYHLNKSQIMLDMLTENLFFDTGMGKSKFLQDMHTLLLTRHRDEHEGETGNWFSPFIEALHKDEGNEAVEAVLLESIHRFNPNAFICQALARHFYIKKKDFGNALNWAKQAKIIEPDNSYISDTLGQVYKSKIRWWIEENGGNGNISVDDLIALLDLAEHASSAFKESQQQSEDREYEVKERLYPKSKRRYDTYNIAGYQGEIEVGLYTIQILQLIPFFDNKNELSKRYMVNFVSGSSDIPGDPNNEYKLALKNYIPYLTKLKFSLKKSFDFFDEYFVLLKPRNNIKQNEEAKTRRKVAGYFKKYVDIFCLLEESQNNTGLGSKFSEPLQVERCRRNLVALKADKFSGLLEYLIKSQEDAISTMKCIVNEYTFLLEQCTVKIQSKEKLNFILANIILSCIQPTSRLVKPVEKLKDQLREVLQPIGLTYQFSEPYFLASLLFWPENQQLDQHSEQMKEYAQALKNSFKGQYKHMHRTKQPIAYFFLGKGKRLERLVHKGKIDQCFKKTPDINSLWQSGDVWKEEKVQELLLRLQGRAENNCLYIEYGINEKITIPITPAFLGQLRSGRSIEKVSFYLGFSIGGPLAYDIEIV.

The region spanning 14 to 78 is the SAM domain; sequence WTKEDVNQWL…ELFKELRKTA (65 aa). Residues 83-135 are disordered; that stretch reads IQTSKMGKPSKNAPKDQTVSQKERRETSKQKQKGKENPDMANPSAMSTTAKGS. The span at 103–120 shows a compositional bias: basic and acidic residues; that stretch reads QKERRETSKQKQKGKENP.

In terms of assembly, interacts with RGL2. Interacts with EEA1. (Microbial infection) Interacts with myxoma virus protein M062. In terms of tissue distribution, widely expressed. Very low levels are detected in skeletal muscle. Not detected in brain. Down-regulated in aggressive fibromatosis, as well as in breast and colon cancers. Up-regulated in fibroblasts from patients with normophosphatemic tumoral calcinosis (NFTC).

It is found in the cytoplasm. In terms of biological role, double-stranded nucleic acid binding that acts as an antiviral factor by playing an essential role in the formation of cytoplasmic antiviral granules. May play a role in the inflammatory response to tissue injury and the control of extra-osseous calcification, acting as a downstream target of TNF-alpha signaling. Involved in the regulation of EGR1, in coordination with RGL2. May be involved in endosome fusion. The sequence is that of Sterile alpha motif domain-containing protein 9 (SAMD9) from Homo sapiens (Human).